A 102-amino-acid polypeptide reads, in one-letter code: Chorion protein S15 (102 aa).

Residues 1 to 18 form the signal peptide; sequence MKFLIAFVAIAFFACVSA.

The protein belongs to the chorion protein S15/S18 family.

It is found in the secreted. Functionally, chorion membrane (egg shell) protein; plays a role in protecting the egg from the environment. This is Chorion protein S15 (Cp15) from Drosophila grimshawi (Hawaiian fruit fly).